The following is a 349-amino-acid chain: Green-sensitive opsin-2 (349 aa).

Residues 1–36 (MNGTEGNNFYVPLSNRTGLVRSPFEYPQYYLAEPWQ) lie on the Extracellular side of the membrane. N-linked (GlcNAc...) asparagine glycosylation is found at asparagine 2 and asparagine 15. The chain crosses the membrane as a helical span at residues 37–61 (FKLLAVYMFFLICLGLPINGLTLIC). Over 62 to 73 (TAQHKKLRQPLN) the chain is Cytoplasmic. Residues 74–99 (FILVNLAVAGAIMVCFGFTVTFYTAI) traverse the membrane as a helical segment. The Extracellular segment spans residues 100–113 (NGYFALGPTGCAVE). Cysteine 110 and cysteine 187 are joined by a disulfide. A helical membrane pass occupies residues 114–133 (GFMATLGGEVALWSLVVLAI). The Cytoplasmic portion of the chain corresponds to 134 to 152 (ERYIVVCKPMGSFKFSSTH). A helical membrane pass occupies residues 153–176 (ASAGIAFTWVMAMACAAPPLVGWS). At 177 to 202 (RYIPEGIQCSCGPDYYTLNPEYNNES) the chain is on the extracellular side. Residues 203-230 (YVLYMFICHFILPVTIIFFTYGRLVCTV) form a helical membrane-spanning segment. Residues 231–252 (KAAAAQQQDSASTQKAEREVTK) lie on the Cytoplasmic side of the membrane. Residues 253–276 (MVILMVLGFLVAWTPYATVAAWIF) traverse the membrane as a helical segment. Over 277–284 (FNKGAAFS) the chain is Extracellular. The helical transmembrane segment at 285–309 (AQFMAIPAFFSKTSALYNPVIYVLL) threads the bilayer. Lysine 296 carries the N6-(retinylidene)lysine modification. Topologically, residues 310-349 (NKQFRSCMLTTLFCGKNPLGDEESSTVSTSKTEVSSVSPA) are cytoplasmic. The interval 329–349 (GDEESSTVSTSKTEVSSVSPA) is disordered. Residues 334 to 349 (STVSTSKTEVSSVSPA) are compositionally biased toward low complexity.

Belongs to the G-protein coupled receptor 1 family. Opsin subfamily. In terms of processing, phosphorylated on some or all of the serine and threonine residues present in the C-terminal region. In terms of tissue distribution, the color pigments are found in the cone photoreceptor cells.

It localises to the membrane. Its function is as follows. Visual pigments are the light-absorbing molecules that mediate vision. They consist of an apoprotein, opsin, covalently linked to cis-retinal. This Carassius auratus (Goldfish) protein is Green-sensitive opsin-2.